A 178-amino-acid polypeptide reads, in one-letter code: 2-oxo-4-hydroxy-4-carboxy-5-ureidoimidazoline decarboxylase (178 aa).

Residue His67 is the Proton donor of the active site. Residues Pro68, 84–88, and 119–123 each bind substrate; these read SQREQ and FVLAA.

The protein belongs to the OHCU decarboxylase family.

The protein localises to the peroxisome. It catalyses the reaction 5-hydroxy-2-oxo-4-ureido-2,5-dihydro-1H-imidazole-5-carboxylate + H(+) = (S)-allantoin + CO2. The protein operates within purine metabolism; urate degradation; (S)-allantoin from urate: step 3/3. Catalyzes the stereoselective decarboxylation of 2-oxo-4-hydroxy-4-carboxy-5-ureidoimidazoline (OHCU) to (S)-allantoin. This is 2-oxo-4-hydroxy-4-carboxy-5-ureidoimidazoline decarboxylase (Urad) from Mus musculus (Mouse).